A 348-amino-acid chain; its full sequence is Galactose-1-phosphate uridylyltransferase (348 aa).

Residue 28–31 coordinates UDP-alpha-D-glucose; sequence RAKR. 2 residues coordinate Zn(2+): cysteine 52 and cysteine 55. UDP-alpha-D-glucose is bound by residues valine 61 and 77–78; that span reads ND. Position 115 (histidine 115) interacts with Zn(2+). Residues asparagine 153 and 159 to 161 contribute to the UDP-alpha-D-glucose site; that span reads GCS. Histidine 164 contributes to the Zn(2+) binding site. Histidine 166 functions as the Tele-UMP-histidine intermediate in the catalytic mechanism. Glutamine 168 contributes to the UDP-alpha-D-glucose binding site. Positions 182, 281, 296, and 298 each coordinate Fe cation. UDP-alpha-D-glucose-binding positions include 311–312, 316–317, and glutamine 323; these read KF and YE.

Belongs to the galactose-1-phosphate uridylyltransferase type 1 family. As to quaternary structure, homodimer. Zn(2+) serves as cofactor.

The catalysed reaction is alpha-D-galactose 1-phosphate + UDP-alpha-D-glucose = alpha-D-glucose 1-phosphate + UDP-alpha-D-galactose. The protein operates within carbohydrate metabolism; galactose metabolism. The polypeptide is Galactose-1-phosphate uridylyltransferase (galT) (Escherichia coli (strain K12)).